A 349-amino-acid chain; its full sequence is MCNQHQTRVLSVSHAKAKFEQTTIERRGLRPHDVLIDIKFSGICHSDIHSAFDEWGGGIFPMVPGHEIAGVVTAVGTKVTKLAVGDRVGVGCFVDSCGECEYCLNAEEQFCTKGVVQTYNSVDYDGNPTYGGYSQKIVVTDRFVVRIPDRLEMDVASPLLCAGITTYSPLKHWNVGPGKKVAIVGVGGLGHLAIQFAHAMGAEVTVLSRSMNKKEEALELGANHYFATSDPATFTALAGRFDVILNTVSANLDVDAYLSMLRIDGTLVSVGAPAKPDTYSVFSLIMGRRSIAGSLVGGIQETQEMLDFAAEHGIEPKIEVIGADQVDEAYERILRSDVRYRFVIDISTL.

Zn(2+)-binding residues include Cys44, His66, Cys97, Cys100, Cys103, Cys111, and Cys161.

The protein belongs to the zinc-containing alcohol dehydrogenase family. Zn(2+) is required as a cofactor.

Functionally, functions in the protection against aldehyde-stress. The polypeptide is Probable formaldehyde dehydrogenase AdhA (adhA) (Bacillus subtilis (strain 168)).